The sequence spans 356 residues: MSRILLAGGGTAGHVNPLLALADVLKVSGHATFALGTSEGIESRLVPNSGIDFFTIPKLPFPRRTSRHILCFPFKFFSSVKLVRSILIEHKIQVVVGFGGYVAAPAYAAAISLNIPYVVHESNARPGLANLLAAHFAKCVGISVIGALPCGKLVGTPIRRDLTAAASFDPVLAKEKLGLDPVRKLLLVFGGSQGSAKINMHMRAALPRVLKLCDEKNYLWQVLHITGYGDSIDVNMPHYSSVRYMDSMGYALSAADLVVSRAGSSTVAELCTFGIPAIYIPYPFGNGEQRRNVSHMESAARIIQENDLSQIRLEDELLELMTDDERREAMSIAAKRFAICNAAQNTASLIELALSS.

UDP-N-acetyl-alpha-D-glucosamine is bound by residues 11-13 (TAG), Asn123, Arg159, and Ser192.

The protein belongs to the glycosyltransferase 28 family. MurG subfamily.

It localises to the cell membrane. The enzyme catalyses di-trans,octa-cis-undecaprenyl diphospho-N-acetyl-alpha-D-muramoyl-L-alanyl-D-glutamyl-meso-2,6-diaminopimeloyl-D-alanyl-D-alanine + UDP-N-acetyl-alpha-D-glucosamine = di-trans,octa-cis-undecaprenyl diphospho-[N-acetyl-alpha-D-glucosaminyl-(1-&gt;4)]-N-acetyl-alpha-D-muramoyl-L-alanyl-D-glutamyl-meso-2,6-diaminopimeloyl-D-alanyl-D-alanine + UDP + H(+). It functions in the pathway cell wall biogenesis; peptidoglycan biosynthesis. In terms of biological role, cell wall formation. Catalyzes the transfer of a GlcNAc subunit on undecaprenyl-pyrophosphoryl-MurNAc-pentapeptide (lipid intermediate I) to form undecaprenyl-pyrophosphoryl-MurNAc-(pentapeptide)GlcNAc (lipid intermediate II). This is UDP-N-acetylglucosamine--N-acetylmuramyl-(pentapeptide) pyrophosphoryl-undecaprenol N-acetylglucosamine transferase from Tropheryma whipplei (strain Twist) (Whipple's bacillus).